A 76-amino-acid chain; its full sequence is Esculentin-2SN1 (76 aa).

The first 22 residues, 1–22, serve as a signal peptide directing secretion; that stretch reads MFTMKKSLLFLFFLGTISLSLC. A propeptide spanning residues 23 to 37 is cleaved from the precursor; sequence EQERGADEDDGGEEV. A disulfide bridge links C70 with C76.

Belongs to the frog skin active peptide (FSAP) family. Esculentin subfamily. Expressed by the skin glands.

It is found in the secreted. Antimicrobial peptide. Active against some Gram-negative and a variety of Gram-positive bacterial strains. Not active against fungi. Shows very weak hemolytic activity against human erythrocytes. In Sylvirana spinulosa (Fine-spined frog), this protein is Esculentin-2SN1.